We begin with the raw amino-acid sequence, 222 residues long: Ribonuclease HII (222 aa).

Residues 17 to 206 form the RNase H type-2 domain; the sequence is DLVAGVDEVG…VRAAHEARAS (190 aa). Positions 23, 24, and 115 each coordinate a divalent metal cation.

Belongs to the RNase HII family. The cofactor is Mn(2+). Mg(2+) is required as a cofactor.

Its subcellular location is the cytoplasm. The enzyme catalyses Endonucleolytic cleavage to 5'-phosphomonoester.. Endonuclease that specifically degrades the RNA of RNA-DNA hybrids. This chain is Ribonuclease HII, found in Pseudomonas savastanoi pv. phaseolicola (strain 1448A / Race 6) (Pseudomonas syringae pv. phaseolicola (strain 1448A / Race 6)).